A 427-amino-acid polypeptide reads, in one-letter code: Terminal nucleotidyltransferase 5B (427 aa).

Positions 1 to 49 (MMPSESGAESLEQPAAQVGTGAASAVATAGAAGGGPDPEASSASLGRHQ) are disordered. A compositionally biased stretch (low complexity) spans 15–30 (AAQVGTGAASAVATAG).

Belongs to the TENT family.

The protein resides in the cytoplasm. The protein localises to the nucleus. It carries out the reaction RNA(n) + ATP = RNA(n)-3'-adenine ribonucleotide + diphosphate. In terms of biological role, catalyzes the transfer of one adenosine molecule from an ATP to an mRNA poly(A) tail bearing a 3'-OH terminal group in an ATP hydrolysis-dependent manner. May be involved in maintaining the translation efficiency of at least some genes through preventing degradation of their mRNAs. Prefers RNA molecules that are adenosine-rich close to 3'-end. In addition, may inhibit cell proliferation and cell cycle progression through ubiquitination of beta-catenin/CTNNB1. The polypeptide is Terminal nucleotidyltransferase 5B (Mus musculus (Mouse)).